A 2343-amino-acid chain; its full sequence is Coagulation factor VIII (2343 aa).

Residues methionine 1–serine 19 form the signal peptide. Plastocyanin-like domains are found at residues alanine 20 to cysteine 199 and glutamate 207 to cysteine 343. The F5/8 type A 1 domain occupies alanine 20–cysteine 343. Asparagine 233 and asparagine 253 each carry an N-linked (GlcNAc...) asparagine glycan. Residues tyrosine 359 and tyrosine 408 each carry the sulfotyrosine modification. Plastocyanin-like domains are found at residues lysine 393–cysteine 567 and asparagine 577–cysteine 724. The F5/8 type A 2 domain occupies lysine 393 to cysteine 724. N-linked (GlcNAc...) asparagine glycosylation is present at asparagine 595. 3 positions are modified to sulfotyrosine: tyrosine 731, tyrosine 732, and tyrosine 736. A compositionally biased stretch (polar residues) spans proline 752–histidine 761. Disordered stretches follow at residues proline 752–threonine 774 and alanine 828–glutamate 865. A b region spans residues serine 754 to arginine 1659. Basic and acidic residues-rich tracts occupy residues alanine 828–glycine 841 and proline 850–threonine 861. Residues asparagine 877, asparagine 921, asparagine 937, asparagine 938, asparagine 956, asparagine 1007, asparagine 1019, asparagine 1037, asparagine 1062, asparagine 1069, and asparagine 1080 are each glycosylated (N-linked (GlcNAc...) asparagine). The segment at glycine 1124 to serine 1147 is disordered. Polar residues predominate over residues lysine 1125 to serine 1147. N-linked (GlcNAc...) asparagine glycans are attached at residues asparagine 1179, asparagine 1193, asparagine 1275, asparagine 1290, asparagine 1308, asparagine 1341, asparagine 1391, asparagine 1419, asparagine 1429, asparagine 1453, asparagine 1547, and asparagine 1618. A compositionally biased stretch (polar residues) spans threonine 1302 to isoleucine 1314. The disordered stretch occupies residues threonine 1302–arginine 1326. The tract at residues lysine 1592–glutamine 1632 is disordered. A sulfotyrosine mark is found at tyrosine 1675 and tyrosine 1691. Plastocyanin-like domains follow at residues lysine 1705–cysteine 1869 and glycine 1879–cysteine 2032. One can recognise an F5/8 type A 3 domain in the interval lysine 1705–cysteine 2032. Residue asparagine 1821 is glycosylated (N-linked (GlcNAc...) asparagine). F5/8 type C domains follow at residues cysteine 2032–cysteine 2180 and cysteine 2185–cysteine 2337. 2 disulfide bridges follow: cysteine 2032/cysteine 2180 and cysteine 2185/cysteine 2337. 2 N-linked (GlcNAc...) asparagine glycosylation sites follow: asparagine 2129 and asparagine 2281.

The protein belongs to the multicopper oxidase family. As to quaternary structure, interacts with vWF. vWF binding is essential for the stabilization of F8 in circulation. Proteolytically cleaved by cathepsin CTSG to produce a partially activated form.

The protein localises to the secreted. Its subcellular location is the extracellular space. In terms of biological role, factor VIII, along with calcium and phospholipid, acts as a cofactor for factor IXa when it converts factor X to the activated form, factor Xa. This is Coagulation factor VIII (F8) from Canis lupus familiaris (Dog).